The sequence spans 104 residues: Snakin-2 (104 aa).

Residues 1 to 23 (MAISKALFASLLLSLLLLEQVQS) form the signal peptide. Positions 24–38 (IQTDQVTSNAISEAA) are cleaved as a propeptide — removed in mature form.

The protein belongs to the GASA family. In terms of processing, six disulfide bonds may be present. As to expression, expressed in tubers, stems, flowers, shoot apex and leaves, but not in roots or stolons.

It is found in the secreted. Its subcellular location is the cell wall. Its function is as follows. Has an antimicrobial activity. Causes a rapid aggregation of both Gram-positive and Gram-negative bacteria, but the antimicrobial activity is not correlated with the capacity to aggregate bacteria. This Solanum tuberosum (Potato) protein is Snakin-2 (SN2).